Reading from the N-terminus, the 89-residue chain is Small ribosomal subunit protein uS15 (89 aa).

This sequence belongs to the universal ribosomal protein uS15 family. As to quaternary structure, part of the 30S ribosomal subunit. Forms a bridge to the 50S subunit in the 70S ribosome, contacting the 23S rRNA.

In terms of biological role, one of the primary rRNA binding proteins, it binds directly to 16S rRNA where it helps nucleate assembly of the platform of the 30S subunit by binding and bridging several RNA helices of the 16S rRNA. Its function is as follows. Forms an intersubunit bridge (bridge B4) with the 23S rRNA of the 50S subunit in the ribosome. The protein is Small ribosomal subunit protein uS15 of Methylocella silvestris (strain DSM 15510 / CIP 108128 / LMG 27833 / NCIMB 13906 / BL2).